The sequence spans 349 residues: Isopentenyl-diphosphate delta-isomerase (349 aa).

Position 6–7 (6–7) interacts with substrate; the sequence is RK. FMN-binding positions include 62–64, Ser93, and Asn122; that span reads AMT. Residue Gln152 coordinates substrate. Mg(2+) is bound at residue Glu153. Residues Lys184, Thr214, 258–259, and 280–281 each bind FMN; these read GG and AG.

It belongs to the IPP isomerase type 2 family. As to quaternary structure, homooctamer. Dimer of tetramers. FMN serves as cofactor. Requires NADPH as cofactor. The cofactor is Mg(2+).

It localises to the cytoplasm. It carries out the reaction isopentenyl diphosphate = dimethylallyl diphosphate. In terms of biological role, involved in the biosynthesis of isoprenoids. Catalyzes the 1,3-allylic rearrangement of the homoallylic substrate isopentenyl (IPP) to its allylic isomer, dimethylallyl diphosphate (DMAPP). This Bacillus cereus (strain AH187) protein is Isopentenyl-diphosphate delta-isomerase.